Consider the following 919-residue polypeptide: Glutamate receptor ionotropic, kainate 3 (919 aa).

The signal sequence occupies residues 1–31 (MTAPWRRLRSLVWEYWAGFLVCAFWIPDSRG). Residues 32–563 (MPHVIRIGGI…VFSFLNPLSP (532 aa)) lie on the Extracellular side of the membrane. Residues Asn70, Asn76, Asn278, Asn381, Asn415, Asn426, and Asn433 are each glycosylated (N-linked (GlcNAc...) asparagine). A disulfide bond links Cys99 and Cys350. L-glutamate-binding residues include Pro518, Thr520, and Arg525. N-linked (GlcNAc...) asparagine glycosylation is found at Asn548 and Asn551. A helical transmembrane segment spans residues 564–584 (DIWMYVLLAYLGVSCVLFVIA). Residues 585–636 (RFSPYEWYDAHPCNPGSEVVENNFTLLNSFWFGMGSLMQQGSELMPKALSTR) lie on the Cytoplasmic side of the membrane. The chain crosses the membrane as a helical span at residues 637-657 (IIGGIWWFFTLIIISSYTANL). The Extracellular segment spans residues 658 to 820 (AAFLTVERME…KEASALGIQK (163 aa)). Residues Ala691, Thr692, and Glu739 each contribute to the L-glutamate site. Asn752 carries an N-linked (GlcNAc...) asparagine glycan. A helical membrane pass occupies residues 821 to 841 (IGGIFIVLAAGLVLSVLVAVG). Residues 842 to 919 (EFIYKLRKTA…CSTSLAPVFP (78 aa)) are Cytoplasmic-facing. Ser869 is modified (phosphoserine). Residue Lys887 forms a Glycyl lysine isopeptide (Lys-Gly) (interchain with G-Cter in SUMO1) linkage.

It belongs to the glutamate-gated ion channel (TC 1.A.10.1) family. GRIK3 subfamily. As to quaternary structure, homotetramer, and heterotetramer with either GRIK4 or GRIK5. Can form functional heteromeric receptors with GRIK2. Interacts with PRKCABP. Interacts with NETO2. In terms of tissue distribution, detected in whole brain, cerebellum, brain cortex and hippocampus.

The protein localises to the cell membrane. Its subcellular location is the postsynaptic cell membrane. It carries out the reaction Ca(2+)(in) = Ca(2+)(out). Glutamate-gated receptor activity inhibited by spermine. In terms of biological role, ionotropic glutamate receptor that functions as a cation-permeable ligand-gated ion channel, gated by L-glutamate and the glutamatergic agonist kainic acid. Binding of the excitatory neurotransmitter L-glutamate induces a conformation change, leading to the opening of the cation channel, and thereby converts the chemical signal to an electrical impulse. The receptor then desensitizes rapidly and enters a transient inactive state, characterized by the presence of bound agonist. In association with GRIK2, involved in presynaptic facilitation of glutamate release at hippocampal mossy fiber synapses. The protein is Glutamate receptor ionotropic, kainate 3 (Grik3) of Mus musculus (Mouse).